Reading from the N-terminus, the 429-residue chain is Glutamate-1-semialdehyde 2,1-aminomutase 2 (429 aa).

Position 268 is an N6-(pyridoxal phosphate)lysine (K268).

Belongs to the class-III pyridoxal-phosphate-dependent aminotransferase family. HemL subfamily. As to quaternary structure, homodimer. Pyridoxal 5'-phosphate serves as cofactor.

It localises to the cytoplasm. It carries out the reaction (S)-4-amino-5-oxopentanoate = 5-aminolevulinate. It functions in the pathway porphyrin-containing compound metabolism; protoporphyrin-IX biosynthesis; 5-aminolevulinate from L-glutamyl-tRNA(Glu): step 2/2. The chain is Glutamate-1-semialdehyde 2,1-aminomutase 2 from Bacillus cereus (strain AH187).